The primary structure comprises 185 residues: Elongation factor P (185 aa).

The protein belongs to the elongation factor P family.

Its subcellular location is the cytoplasm. Its pathway is protein biosynthesis; polypeptide chain elongation. Its function is as follows. Involved in peptide bond synthesis. Stimulates efficient translation and peptide-bond synthesis on native or reconstituted 70S ribosomes in vitro. Probably functions indirectly by altering the affinity of the ribosome for aminoacyl-tRNA, thus increasing their reactivity as acceptors for peptidyl transferase. This chain is Elongation factor P, found in Mesomycoplasma hyopneumoniae (strain J / ATCC 25934 / NCTC 10110) (Mycoplasma hyopneumoniae).